The chain runs to 689 residues: Glycine--tRNA ligase beta subunit (689 aa).

Belongs to the class-II aminoacyl-tRNA synthetase family. Tetramer of two alpha and two beta subunits.

It localises to the cytoplasm. It catalyses the reaction tRNA(Gly) + glycine + ATP = glycyl-tRNA(Gly) + AMP + diphosphate. The sequence is that of Glycine--tRNA ligase beta subunit from Shewanella baltica (strain OS195).